The chain runs to 115 residues: MPRRRRRRGSSGAGGRGRTCSRTVRAELSFSVSQVERSLREGHYAQRLSRTAPVYLAAVIEYLTAKVPELAGNEAQNSGERNITPLLLDMVVHNDRLLSTLFNTTTISQVAPGED.

Residues 1–21 (MPRRRRRRGSSGAGGRGRTCS) are disordered. The tract at residues 87–115 (LLDMVVHNDRLLSTLFNTTTISQVAPGED) is docking domain.

It belongs to the histone H2A family. As to quaternary structure, the nucleosome is a histone octamer containing two molecules each of H2A, H2B, H3 and H4 assembled in one H3-H4 heterotetramer and two H2A-H2B heterodimers. May be incorporated into a proportion of nucleosomes, replacing one or more H2A molecules. As to expression, present in mature sperm.

It localises to the nucleus. Its subcellular location is the chromosome. In terms of biological role, atypical histone H2A which can replace conventional H2A in some nucleosomes and is associated with active transcription and mRNA processing. Nucleosomes wrap and compact DNA into chromatin, limiting DNA accessibility to the cellular machineries which require DNA as a template. Histones thereby play a central role in transcription regulation, DNA repair, DNA replication and chromosomal stability. Nucleosomes containing this histone are less rigid and organize less DNA than canonical nucleosomes in vivo. They are enriched in actively transcribed genes and associate with the elongating form of RNA polymerase. They associate with spliceosome components and are required for mRNA splicing. The chain is Histone H2A-Bbd type 1 from Homo sapiens (Human).